The following is a 254-amino-acid chain: Ribosomal RNA small subunit methyltransferase J (254 aa).

S-adenosyl-L-methionine-binding positions include 107–108, 123–124, and aspartate 177; these read RD and ER.

The protein belongs to the methyltransferase superfamily. RsmJ family.

Its subcellular location is the cytoplasm. It carries out the reaction guanosine(1516) in 16S rRNA + S-adenosyl-L-methionine = N(2)-methylguanosine(1516) in 16S rRNA + S-adenosyl-L-homocysteine + H(+). In terms of biological role, specifically methylates the guanosine in position 1516 of 16S rRNA. This is Ribosomal RNA small subunit methyltransferase J from Histophilus somni (strain 2336) (Haemophilus somnus).